The primary structure comprises 482 residues: Butyrophilin-like protein 2 (482 aa).

The Cytoplasmic segment spans residues 1-6; sequence MVDFPG. A helical; Signal-anchor for type II membrane protein transmembrane segment spans residues 7–23; the sequence is YNLSGAVASFLFILLTM. The Extracellular portion of the chain corresponds to 24–482; the sequence is KQSEDFRVIG…VAVGLPRKRS (459 aa). 3 Ig-like V-type domains span residues 29 to 140, 142 to 234, and 236 to 355; these read FRVI…LLLK, AGLG…SVIS, and PEKL…ASLD. Cystine bridges form between Cys-50–Cys-124, Cys-164–Cys-218, and Cys-267–Cys-341. N-linked (GlcNAc...) asparagine glycosylation is present at Asn-210. Asn-427 is a glycosylation site (N-linked (GlcNAc...) asparagine).

This sequence belongs to the immunoglobulin superfamily. BTN/MOG family. As to expression, expressed in brain, heart, kidney, liver, pancreas, ovary, leukocyte, small intestine, testis and thymus.

Its subcellular location is the membrane. Functionally, negative regulator of T-cell proliferation. The sequence is that of Butyrophilin-like protein 2 from Homo sapiens (Human).